Reading from the N-terminus, the 662-residue chain is Probable quinol oxidase subunit 1 (662 aa).

The next 2 membrane-spanning stretches (helical) occupy residues 14-34 and 58-78; these read WMIT…IAVI and VMYL…ALLI. Residue His102 coordinates Fe(II)-heme a. 8 consecutive transmembrane segments (helical) span residues 103-123, 140-160, 187-207, 228-248, 273-293, 311-331, 336-356, and 376-396; these read GVIM…NIVV, VSFW…IIGG, IAIQ…FVTI, FITT…LALM, FFWV…FGIY, MVWA…HHFF, GALI…PTGV, and MLFS…GVML. His279, Tyr283, His328, and His329 together coordinate Cu cation. Residues 279 to 283 constitute a cross-link (1'-histidyl-3'-tyrosine (His-Tyr)); the sequence is HPEVY. A heme a3-binding site is contributed by His414. Transmembrane regions (helical) follow at residues 415–435, 451–471, 493–513, 587–604, and 608–627; these read FHYT…IFWY, CFWF…ILGL, ISTI…VSIV, PVGF…FFLI, and VIPA…YRSF. His416 serves as a coordination point for Fe(II)-heme a.

This sequence belongs to the heme-copper respiratory oxidase family. The cofactor is Cu cation. Ferriheme a is required as a cofactor. It depends on Heme A3. as a cofactor.

It localises to the cell membrane. It catalyses the reaction 2 a quinol + O2 = 2 a quinone + 2 H2O. It participates in energy metabolism; oxidative phosphorylation. In terms of biological role, catalyzes quinol oxidation with the concomitant reduction of oxygen to water. This Staphylococcus aureus (strain COL) protein is Probable quinol oxidase subunit 1 (qoxB).